A 57-amino-acid chain; its full sequence is Protein CgkB (57 aa).

This chain is Protein CgkB (cgkB), found in Pseudoalteromonas carrageenovora (Alteromonas carrageenovora).